We begin with the raw amino-acid sequence, 25 residues long: Gamma-conotoxin PiVIIA (25 aa).

Disulfide bonds link Cys-1/Cys-15, Cys-8/Cys-19, and Cys-14/Cys-24. The residue at position 4 (Pro-4) is a 4-hydroxyproline. Glu-13 and Glu-20 each carry 4-carboxyglutamate.

Belongs to the conotoxin O2 superfamily. Expressed by the venom duct.

It is found in the secreted. Its function is as follows. Micromolar concentrations of PiVIIA increase the magnitude of the macroscopic calcium current in DRG neurons from rat. An increase, even modest of the calcium current, may have a significant impact in the excitability and electrical activity of neurons, and may set up PiVIIA as a member of the pharmacological family of the gamma-conotoxins. The protein is Gamma-conotoxin PiVIIA of Conus princeps (Prince cone).